A 273-amino-acid polypeptide reads, in one-letter code: uncharacterized protein (273 aa).

The signal sequence occupies residues 1–21; sequence MKILRWLFALVMLIATTEAMA.

The protein to S.typhimurium YadU.

Part of the yfcOPQRSUV fimbrial operon. Could contribute to adhesion to various surfaces in specific environmental niches. Increases adhesion to eukaryotic T24 bladder epithelial cells in the absence of fim genes. This is an uncharacterized protein from Escherichia coli (strain K12).